The sequence spans 103 residues: UPF0122 protein FN1394 (103 aa).

It belongs to the UPF0122 family.

Functionally, might take part in the signal recognition particle (SRP) pathway. This is inferred from the conservation of its genetic proximity to ftsY/ffh. May be a regulatory protein. The sequence is that of UPF0122 protein FN1394 from Fusobacterium nucleatum subsp. nucleatum (strain ATCC 25586 / DSM 15643 / BCRC 10681 / CIP 101130 / JCM 8532 / KCTC 2640 / LMG 13131 / VPI 4355).